The following is a 222-amino-acid chain: Twisted gastrulation protein homolog 1 (222 aa).

Positions 1–24 (MKSHYIVLALASLTFLLCLPVSQS) are cleaved as a signal peptide. N-linked (GlcNAc...) asparagine glycosylation is found at asparagine 80 and asparagine 146.

It belongs to the twisted gastrulation protein family. As to quaternary structure, interacts with CHRD and/or BMP4. This interaction enhances CHRD/BMP4 complex formation. Interacts with BMP7. As to expression, expressed in lymph node, liver, kidney, and lung. Expression in the kidney was stronger in the medulla than in the cortex, particularly in the cells surrounding the medullary tubules. Expressed in growth plate cartilage of long bones, ribs, and digits and to a lesser extent also in the resting zone of the epiphysis, trabecular bone, and vertebral cartilage. Expression seems to be absent from other skeletal tissues including muscle, skin, and fibroblasts.

The protein resides in the secreted. In terms of biological role, may be involved in dorsoventral axis formation. Seems to antagonize BMP signaling by forming ternary complexes with CHRD and BMPs, thereby preventing BMPs from binding to their receptors. In addition to the anti-BMP function, also has pro-BMP activity, partly mediated by cleavage and degradation of CHRD, which releases BMPs from ternary complexes. May be an important modulator of BMP-regulated cartilage development and chondrocyte differentiation. May play a role in thymocyte development. The chain is Twisted gastrulation protein homolog 1 (Twsg1) from Mus musculus (Mouse).